The primary structure comprises 522 residues: MGQEKHTDAASQSRDPEAVAAHENDQLRQRNHALAKALTRATEELRKAKAQLEQFMAPPLTMATMVRVHRCSTDEHGVRHASAEILNGNRRQIVPLSPTVNPAQLGSGQGVLLDANMVIVDSCETPTTGPMRAVSESLADGRLIVSDVGGNRGVVMRASAVARTPINVDDRVVIDPSGTYVLSVLPQEQAQDLLLEETPDVSFTDIGGLDEQIARIRDAVQLPFQHRDLFDRFDLKAPKGVLLYGPPGNGKTLIAKAIAHELAAGSGNDGVFLSVKGPELLNKFVGESERLIRRIFERAKELSGAGRPVIVFIDEMDSLLRTRGTGVSSDVETTIVPQFLTELDGVESLDDVMVIGASNRIDMIDPAVLRPGRLDVKIHVTRPDETAAMAITRHYLTDALPLEPGRDADALAASLVRDLFRRDESRLLATLDEQGRRRGIYMADIVSGAMLRNIVDRAKTKAVKAEILHGSVSRDDEPQGITEARIHEAIDDEYEQNRSTINETDPGQWLRINALTLAADGV.

Residues 1–26 (MGQEKHTDAASQSRDPEAVAAHENDQ) form a disordered region. A coiled-coil region spans residues 20 to 57 (AAHENDQLRQRNHALAKALTRATEELRKAKAQLEQFMA). Residue 248–253 (GNGKTL) coordinates ATP.

This sequence belongs to the AAA ATPase family. As to quaternary structure, homohexamer. Assembles into a hexameric ring structure.

This is AAA ATPase forming ring-shaped complexes from Bifidobacterium animalis subsp. lactis (strain AD011).